We begin with the raw amino-acid sequence, 192 residues long: Ion-translocating oxidoreductase complex subunit B (192 aa).

Positions 1–26 are hydrophobic; the sequence is MSTIWIAIAALSALALAFGLVLGYAS. The 60-residue stretch at 32–91 folds into the 4Fe-4S domain; that stretch reads ENDPIVEEVEAMLPQSQCGQCGYPGCRPYAEAVALNGENINKCGPGGEAMMLKLAEKLNV. 12 residues coordinate [4Fe-4S] cluster: Cys49, Cys52, Cys57, Cys74, Cys117, Cys120, Cys123, Cys127, Cys147, Cys150, Cys153, and Cys157. 4Fe-4S ferredoxin-type domains are found at residues 108-137 and 138-167; these read QVAW…GSTK and AVHT…LRPI.

It belongs to the 4Fe4S bacterial-type ferredoxin family. RnfB subfamily. The complex is composed of six subunits: RnfA, RnfB, RnfC, RnfD, RnfE and RnfG. Requires [4Fe-4S] cluster as cofactor.

Its subcellular location is the cell inner membrane. Functionally, part of a membrane-bound complex that couples electron transfer with translocation of ions across the membrane. This chain is Ion-translocating oxidoreductase complex subunit B, found in Pectobacterium carotovorum subsp. carotovorum (strain PC1).